A 519-amino-acid chain; its full sequence is MGLMIFAYIAIGAVLGAGTGYLLHRYVSAKRIGDANELAKRIVEEARKEAQAQKKEILLQGQDEIFNQKRELENEFKERERELKARDRKLEEQGERLEEKLEKATQKEHEVLAIEKELTRKERRLATLEEELEGKIAEQDHRLEEVSGLTAEEARARIMEEVEARTRHESAKMIRVIEMEARETADRKAKEILASAIQRYAGDYVGEQTVTAVTLPSEDMKGRIIGREGRNIRALEAATGVDLIIDDTPETVILSAYSPLRRQVAKMALERLIQDGRIHPARIEDIVRKCEQELEVQVREVGEQATFDAGVHGIHPDIIKLLGQLRYRTSFSQNVLQHSLEVSALCGMMAAELGMDIKKAKRAGLLHDIGKAVDHEVEGPHALIGADIAKKYGEGKDIIHAIAAHHEDQPPKTALAVLVQAADSISGARPGARKELLENYVKRLEDLENIATGFEGVSKVYAIQAGREIRVMVNSENVDDDQTYMLCKDIAAKIEKNLTYPGQIRVTVIRERRAVGYAK.

The helical transmembrane segment at 3 to 23 (LMIFAYIAIGAVLGAGTGYLL) threads the bilayer. In terms of domain architecture, KH spans 209-272 (TVTAVTLPSE…QVAKMALERL (64 aa)). One can recognise an HD domain in the interval 335-428 (VLQHSLEVSA…VQAADSISGA (94 aa)).

The protein belongs to the RNase Y family.

The protein resides in the cell membrane. Endoribonuclease that initiates mRNA decay. This is Ribonuclease Y from Nitratidesulfovibrio vulgaris (strain ATCC 29579 / DSM 644 / CCUG 34227 / NCIMB 8303 / VKM B-1760 / Hildenborough) (Desulfovibrio vulgaris).